The primary structure comprises 577 residues: Outer spore wall assembly protein SHE10 (577 aa).

The first 23 residues, 1-23 (MGKLIKLITTLTVLVSLLQYCCE), serve as a signal peptide directing secretion. Coiled coils occupy residues 379-416 (NETRSTLDELTNAMEKDLSEITDEIEKKVNAIREENVE) and 513-561 (ILRS…EEDV). A compositionally biased stretch (basic and acidic residues) spans 525 to 545 (RERKERERKEREKAAAEEFQR). Residues 525-577 (RERKERERKEREKAAAEEFQRQQELLRQQEEEDEEDVSYTSTSTITTTTTMTL) form a disordered region. Residues 562-577 (SYTSTSTITTTTTMTL) show a composition bias toward low complexity.

It belongs to the SHE10 family. As to quaternary structure, component of the mitochondria-localized RNase mitochondrial RNA-processing (RNase MRP) composed of one single RNA encoded by the NME1 gene and at least 31 proteins. Absent in the nucleus-localized RNase MRP (NuMRP).

It localises to the mitochondrion. Involved in spore wall assembly. May be a component of the mitochondrial RNase MRP (MtMRP), a ribonucleoprotein endoribonuclease involved in the cleaving RNA transcripts to generate primers for DNA replication in mitochondria. This Saccharomyces cerevisiae (strain YJM789) (Baker's yeast) protein is Outer spore wall assembly protein SHE10.